The chain runs to 655 residues: FYVE, RhoGEF and PH domain-containing protein 2 (655 aa).

2 positions are modified to phosphoserine: S11 and S48. The disordered stretch occupies residues 18-64; that stretch reads VFENSRTPEAAPRGQRLEDVHHRPECRPPESPGPREKTNVGEAVGSE. Positions 32 to 56 are enriched in basic and acidic residues; sequence QRLEDVHHRPECRPPESPGPREKTN. Residues 102–290 enclose the DH domain; sequence PEKKIVQELL…FSAAQHSNAA (189 aa). Residues 319-418 enclose the PH 1 domain; it reads TLLREGPVLK…WMQAFQAAID (100 aa). An FYVE-type zinc finger spans residues 458–518; it reads DKMVTMCMRC…VCLHCYAFLT (61 aa). The Zn(2+) site is built by C464, C467, C481, C484, C489, C492, C510, and C513. Positions 544–641 constitute a PH 2 domain; the sequence is QSLMCSFLQL…WVKAMERAAS (98 aa). Phosphoserine is present on S654.

The protein resides in the cytoplasm. It is found in the cytoskeleton. It localises to the nucleus. Its subcellular location is the early endosome. The protein localises to the early endosome membrane. The protein resides in the cell projection. It is found in the ruffle membrane. Activates CDC42, a member of the Ras-like family of Rho- and Rac proteins, by exchanging bound GDP for free GTP. Activates JNK1 via CDC42 but not RAC1. Binds to phosphatidylinositol 4,5-bisphosphate, phosphatidylinositol 3,4,5-trisphosphate, phosphatidylinositol 5-monophosphate, phosphatidylinositol 4-monophosphate and phosphatidylinositol 3-monophosphate. This Homo sapiens (Human) protein is FYVE, RhoGEF and PH domain-containing protein 2 (FGD2).